A 131-amino-acid polypeptide reads, in one-letter code: Holo-[acyl-carrier-protein] synthase (131 aa).

The Mg(2+) site is built by aspartate 8 and glutamate 63.

The protein belongs to the P-Pant transferase superfamily. AcpS family. It depends on Mg(2+) as a cofactor.

Its subcellular location is the cytoplasm. It catalyses the reaction apo-[ACP] + CoA = holo-[ACP] + adenosine 3',5'-bisphosphate + H(+). In terms of biological role, transfers the 4'-phosphopantetheine moiety from coenzyme A to a Ser of acyl-carrier-protein. In Shewanella pealeana (strain ATCC 700345 / ANG-SQ1), this protein is Holo-[acyl-carrier-protein] synthase.